A 560-amino-acid chain; its full sequence is Probable sulfate transporter MT1781 (560 aa).

A run of 11 helical transmembrane segments spans residues 29–49 (VLAG…YATV), 51–71 (GLPP…YALL), 79–99 (IGPE…MAAG), 105–125 (AVLA…AGTA), 138–158 (VLVG…LGTI), 184–204 (WPTF…TRWA), 207–227 (APGP…MSLD), 256–276 (ALII…VLTA), 333–353 (LIAL…LAMF), 355–375 (IAAL…LSEF), and 394–414 (AAVL…LSIL). Residues 442-557 (DYPQAKRVPG…MTLPTAVQAF (116 aa)) form the STAS domain.

This sequence belongs to the SLC26A/SulP transporter (TC 2.A.53) family.

It is found in the cell membrane. This chain is Probable sulfate transporter MT1781, found in Mycobacterium tuberculosis (strain CDC 1551 / Oshkosh).